The chain runs to 257 residues: ADP-dependent (S)-NAD(P)H-hydrate dehydratase (257 aa).

Residues 1 to 257 (MGRLQRTLSN…VIERIPDTIR (257 aa)) enclose the YjeF C-terminal domain. Gly-200 serves as a coordination point for AMP. Asp-201 provides a ligand contact to (6S)-NADPHX.

This sequence belongs to the NnrD/CARKD family. In terms of assembly, homotetramer. It depends on Mg(2+) as a cofactor.

The enzyme catalyses (6S)-NADHX + ADP = AMP + phosphate + NADH + H(+). The catalysed reaction is (6S)-NADPHX + ADP = AMP + phosphate + NADPH + H(+). Catalyzes the dehydration of the S-form of NAD(P)HX at the expense of ADP, which is converted to AMP. Together with NAD(P)HX epimerase, which catalyzes the epimerization of the S- and R-forms, the enzyme allows the repair of both epimers of NAD(P)HX, a damaged form of NAD(P)H that is a result of enzymatic or heat-dependent hydration. This chain is ADP-dependent (S)-NAD(P)H-hydrate dehydratase, found in Haloterrigena turkmenica (strain ATCC 51198 / DSM 5511 / JCM 9101 / NCIMB 13204 / VKM B-1734 / 4k) (Halococcus turkmenicus).